We begin with the raw amino-acid sequence, 559 residues long: MDNQSTINNNGNNKVQQKVRSACDACQSAKVRCGREKPTCRRCQNQGKTCVYSHARPLGRPRKSGSASSTTTMTTTTVNMNDLRDDAMIIAGSVNGDSEYGSPTRFRSISRVNNDHGMNMNMNNDWPGIPPLPSAGPRIPDILLDDSDENYMDMFMSVRLLGSLSGPSTVTDHHPLPPPEEEDGQEGYQNQHQHHNDPHSLIADPSAATEWDLGFPFDQHSSSESLSLEPSSAGAHPGDIPTSSLSKDGMDFTHTRGSQKISPNPHSIDSRTSSRDKSFNHHRSLSTLGSRTPNTTTTSSSASSVGLTGSSTTGFSRRFRGGGGGVLSLSRRRTECTCCDSMLQILAELDRHIADRSAISLDLIIKLEKETRAQTVAILHCDLCSQTFRPRILILSGLVLEAVVELLEEILHQHQLLGYSTATTTSNTTSSSLSSSLSSSSWIPSGPAGMELASPPPSIFDNNNTSTTTTTSSISTANRPGKTVDICSLWLGDYEISGPEKQEFLKHLLTARLRDIAATIHQLHETMNRYRHRPAFKVGTLMLGEIYRHVQAIVKTLDQ.

The zn(2)-C6 fungal-type DNA-binding region spans 23–50 (CDACQSAKVRCGREKPTCRRCQNQGKTC). Disordered stretches follow at residues 166-316 (GPST…TGFS) and 453-477 (ASPPPSIFDNNNTSTTTTTSSISTA). The span at 222 to 232 (SSESLSLEPSS) shows a compositional bias: low complexity. Residues 255 to 267 (TRGSQKISPNPHS) are compositionally biased toward polar residues. Basic and acidic residues predominate over residues 268–279 (IDSRTSSRDKSF). 2 stretches are compositionally biased toward low complexity: residues 286-316 (STLGSRTPNTTTTSSSASSVGLTGSSTTGFS) and 462-477 (NNNTSTTTTTSSISTA).

Its subcellular location is the nucleus. Functionally, transcription factore; part of the gene cluster that mediates the biosynthesis of the antihypercholesterolemic agents phomoidrides which are dimeric anhydrides. Probably regulates the expression of the genes from the cluster. In Talaromyces stipitatus (strain ATCC 10500 / CBS 375.48 / QM 6759 / NRRL 1006) (Penicillium stipitatum), this protein is Transcription factor tstO.